The sequence spans 109 residues: Cell division protein ZapA (109 aa).

Positions 21 to 99 (PEQRDALNQA…IEQALLEQGR (79 aa)) form a coiled coil.

It belongs to the ZapA family. Type 1 subfamily. Homodimer. Interacts with FtsZ.

It is found in the cytoplasm. Its function is as follows. Activator of cell division through the inhibition of FtsZ GTPase activity, therefore promoting FtsZ assembly into bundles of protofilaments necessary for the formation of the division Z ring. It is recruited early at mid-cell but it is not essential for cell division. The protein is Cell division protein ZapA of Cronobacter sakazakii (strain ATCC BAA-894) (Enterobacter sakazakii).